Consider the following 202-residue polypeptide: Na(+)-translocating NADH-quinone reductase subunit E (202 aa).

6 helical membrane passes run 11–31 (SIFL…FLAV), 39–59 (MGLG…NQLV), 79–99 (LSFL…QILE), 114–134 (GIFL…AFAV), 144–164 (IFYG…LAAV), and 180–200 (LGSV…FSGV).

This sequence belongs to the NqrDE/RnfAE family. Composed of six subunits; NqrA, NqrB, NqrC, NqrD, NqrE and NqrF.

The protein localises to the cell inner membrane. It carries out the reaction a ubiquinone + n Na(+)(in) + NADH + H(+) = a ubiquinol + n Na(+)(out) + NAD(+). In terms of biological role, NQR complex catalyzes the reduction of ubiquinone-1 to ubiquinol by two successive reactions, coupled with the transport of Na(+) ions from the cytoplasm to the periplasm. NqrA to NqrE are probably involved in the second step, the conversion of ubisemiquinone to ubiquinol. This Pseudoalteromonas atlantica (strain T6c / ATCC BAA-1087) protein is Na(+)-translocating NADH-quinone reductase subunit E.